Here is a 163-residue protein sequence, read N- to C-terminus: Probable chemoreceptor glutamine deamidase CheD (163 aa).

Belongs to the CheD family.

The catalysed reaction is L-glutaminyl-[protein] + H2O = L-glutamyl-[protein] + NH4(+). In terms of biological role, probably deamidates glutamine residues to glutamate on methyl-accepting chemotaxis receptors (MCPs), playing an important role in chemotaxis. In Borrelia turicatae (strain 91E135), this protein is Probable chemoreceptor glutamine deamidase CheD.